Here is a 626-residue protein sequence, read N- to C-terminus: MVVQHNQPGSTDQSVIRNFCIIAHIDHGKSTVADRILQLSGIVPEREMRDRFLDRMDIEQERGITIKSQAVRVPWTFEGTEYTLGMIDTPGHVDFTYEVSRALAACEGAVLLVDATQGIEAQTLSNLYMAIDHDLAIIPVLNKIDLPSAEPDKHAEEIAGLIGCEPSDVLRVSGKTGEGVADLLDQIVMDVPAPHGDPDAPARALIFDSVYDSYRGIVTYIRMEDGELHDREKVHMMGIGMTHDPIEIGVISPDMTRTKALGAGEVGYIITGAKDVSQSKVGDTLTSAVRPATEPLPGYRDPKPMVYAGLFPIDNAQFPELRDALDKLKLNDAALIYTPETSVALGFGFRCGFLGLLHMEIVNERLSREFGLDLIQTAPNVTYDVTAEDGSQHHVTNPSEFPDGKIKKIVEPMVAADIITPKEFIGAVMDLCQDHRGIMGTMEYISTDRVEMHYRIPLAEIVFDFFDQLKSRTKGYASLDYHEDGEQSADLVKVDILIQGEKVDAFSAIVHRDKAYSYGVMMTKKLRSLIPRQQFEIPIQAAIGSRIIARENIRALRKDVLAKCYGGDITRKRKLLEKQKAGKKRMKMLGHVEVPQEAFIAALSTGEDSNDRDTKDKIRAAQKTEG.

One can recognise a tr-type G domain in the interval 14-195 (SVIRNFCIIA…QIVMDVPAPH (182 aa)). Residues 26 to 31 (DHGKST) and 142 to 145 (NKID) contribute to the GTP site. A disordered region spans residues 603–626 (LSTGEDSNDRDTKDKIRAAQKTEG). The span at 609 to 626 (SNDRDTKDKIRAAQKTEG) shows a compositional bias: basic and acidic residues.

This sequence belongs to the TRAFAC class translation factor GTPase superfamily. Classic translation factor GTPase family. LepA subfamily.

It is found in the cell membrane. The enzyme catalyses GTP + H2O = GDP + phosphate + H(+). Required for accurate and efficient protein synthesis under certain stress conditions. May act as a fidelity factor of the translation reaction, by catalyzing a one-codon backward translocation of tRNAs on improperly translocated ribosomes. Back-translocation proceeds from a post-translocation (POST) complex to a pre-translocation (PRE) complex, thus giving elongation factor G a second chance to translocate the tRNAs correctly. Binds to ribosomes in a GTP-dependent manner. In Bifidobacterium longum subsp. infantis (strain ATCC 15697 / DSM 20088 / JCM 1222 / NCTC 11817 / S12), this protein is Elongation factor 4.